We begin with the raw amino-acid sequence, 448 residues long: Exodeoxyribonuclease 7 large subunit (448 aa).

This sequence belongs to the XseA family. Heterooligomer composed of large and small subunits.

Its subcellular location is the cytoplasm. It catalyses the reaction Exonucleolytic cleavage in either 5'- to 3'- or 3'- to 5'-direction to yield nucleoside 5'-phosphates.. Bidirectionally degrades single-stranded DNA into large acid-insoluble oligonucleotides, which are then degraded further into small acid-soluble oligonucleotides. The protein is Exodeoxyribonuclease 7 large subunit of Hamiltonella defensa subsp. Acyrthosiphon pisum (strain 5AT).